Here is a 139-residue protein sequence, read N- to C-terminus: Small ribosomal subunit protein uS12m (139 aa).

The N-terminal 29 residues, 1 to 29 (MSWSGLLRGLSMSLNYGLALAPRPWGTRP), are a transit peptide targeting the mitochondrion. The segment at 37-57 (HRRGPPKFPPSKPGPTEGRPQ) is disordered.

It belongs to the universal ribosomal protein uS12 family. In terms of assembly, component of the mitochondrial ribosome small subunit (28S) which comprises a 12S rRNA and about 30 distinct proteins.

It is found in the mitochondrion. The protein is Small ribosomal subunit protein uS12m (MRPS12) of Bos taurus (Bovine).